A 421-amino-acid polypeptide reads, in one-letter code: MDKLIITGGARLDGEIRISGAKNAALPILAATLLADGPVTVGNLPHLHDITTMIELFGRMGIEPVIDEKLSVEIDPRTIKTLVAPYELVKTMRASILVLGPMVARFGEAEVALPGGCAIGSRPVDLHIRGLEAMGAKIEVEGGYIKAKAPEGGLRGAHFFFDTVSVTGTENIMMAAALAKGRSVLQNAAREPEVVDLANFINAMGGNIQGAGTDTITIDGVERLDSANYRVMPDRIETGTYLVAAAVTGGRVKVKDTDPTILEAVLEKLKEAGADINTGEDWIELDMHGKRPKAVNLRTAPYPAFPTDMQAQFISLNAIAEGTGAVIETIFENRFMHVYEMHRMGAQIQVEGNTAIVTGVKALKGAPVMATDLRASASLVLSALVAEGDTLIDRIYHIDRGYECIEEKLQMLGAKIRRVPG.

Position 22–23 (22–23 (KN)) interacts with phosphoenolpyruvate. R93 is a binding site for UDP-N-acetyl-alpha-D-glucosamine. Catalysis depends on C117, which acts as the Proton donor. C117 carries the 2-(S-cysteinyl)pyruvic acid O-phosphothioketal modification. Residues 122 to 126 (RPVDL), D308, and I330 contribute to the UDP-N-acetyl-alpha-D-glucosamine site.

The protein belongs to the EPSP synthase family. MurA subfamily.

The protein resides in the cytoplasm. It catalyses the reaction phosphoenolpyruvate + UDP-N-acetyl-alpha-D-glucosamine = UDP-N-acetyl-3-O-(1-carboxyvinyl)-alpha-D-glucosamine + phosphate. It participates in cell wall biogenesis; peptidoglycan biosynthesis. Cell wall formation. Adds enolpyruvyl to UDP-N-acetylglucosamine. The sequence is that of UDP-N-acetylglucosamine 1-carboxyvinyltransferase from Pseudomonas putida (strain ATCC 700007 / DSM 6899 / JCM 31910 / BCRC 17059 / LMG 24140 / F1).